The chain runs to 251 residues: Haloacid dehalogenase-like hydrolase domain-containing protein 3 (251 aa).

K15 carries the N6-acetyllysine; alternate modification. N6-succinyllysine; alternate is present on K15. Position 130 is an N6-acetyllysine (K130).

It belongs to the HAD-like hydrolase superfamily.

This chain is Haloacid dehalogenase-like hydrolase domain-containing protein 3 (Hdhd3), found in Mus musculus (Mouse).